We begin with the raw amino-acid sequence, 138 residues long: Ribulose bisphosphate carboxylase small subunit (138 aa).

Belongs to the RuBisCO small chain family. As to quaternary structure, heterohexadecamer of 8 large and 8 small subunits.

Its subcellular location is the plastid. The protein resides in the chloroplast. RuBisCO catalyzes two reactions: the carboxylation of D-ribulose 1,5-bisphosphate, the primary event in carbon dioxide fixation, as well as the oxidative fragmentation of the pentose substrate in the photorespiration process. Both reactions occur simultaneously and in competition at the same active site. Although the small subunit is not catalytic it is essential for maximal activity. Carbon dioxide and oxygen bind in the same pocket of the enzyme in a similar manner. The polypeptide is Ribulose bisphosphate carboxylase small subunit (Galdieria sulphuraria (Red alga)).